The chain runs to 165 residues: ATP synthase subunit b (165 aa).

A helical membrane pass occupies residues 10 to 30; sequence LIFWMLLSFGIVFAVLAKYGF.

Belongs to the ATPase B chain family. In terms of assembly, F-type ATPases have 2 components, F(1) - the catalytic core - and F(0) - the membrane proton channel. F(1) has five subunits: alpha(3), beta(3), gamma(1), delta(1), epsilon(1). F(0) has three main subunits: a(1), b(2) and c(10-14). The alpha and beta chains form an alternating ring which encloses part of the gamma chain. F(1) is attached to F(0) by a central stalk formed by the gamma and epsilon chains, while a peripheral stalk is formed by the delta and b chains.

Its subcellular location is the cell inner membrane. Functionally, f(1)F(0) ATP synthase produces ATP from ADP in the presence of a proton or sodium gradient. F-type ATPases consist of two structural domains, F(1) containing the extramembraneous catalytic core and F(0) containing the membrane proton channel, linked together by a central stalk and a peripheral stalk. During catalysis, ATP synthesis in the catalytic domain of F(1) is coupled via a rotary mechanism of the central stalk subunits to proton translocation. Its function is as follows. Component of the F(0) channel, it forms part of the peripheral stalk, linking F(1) to F(0). The polypeptide is ATP synthase subunit b (Bacteroides fragilis (strain ATCC 25285 / DSM 2151 / CCUG 4856 / JCM 11019 / LMG 10263 / NCTC 9343 / Onslow / VPI 2553 / EN-2)).